We begin with the raw amino-acid sequence, 972 residues long: Nuclear factor NF-kappa-B p105 subunit (972 aa).

The region spanning 39–246 (ADGPYLQILE…DAIYDSKAPN (208 aa)) is the RHD domain. Cys-61 is subject to S-nitrosocysteine; alternate. Cys-61 is lipidated: S-(15-deoxy-Delta12,14-prostaglandin J2-9-yl)cysteine; alternate. Residue Lys-325 forms a Glycyl lysine isopeptide (Lys-Gly) (interchain with G-Cter in SUMO2) linkage. Position 337 is a phosphoserine; by PKA (Ser-337). Positions 360–365 (QRKRQK) match the Nuclear localization signal motif. The segment at 372-394 (DSFGGGSGAGAGGGGMFGSGGGG) is GRR. Residues 425–473 (KSNAGMKHGTIDTPSKNDSEGCGKNVDREAVNLSGKVTEPTEQDKESSM) form a disordered region. An N6-acetyllysine; by EP300 mark is found at Lys-431 and Lys-440. Positions 435–972 (IDTPSKNDSE…GQEGPIEGKI (538 aa)) are interaction with CFLAR. Residues 439 to 454 (SKNDSEGCGKNVDREA) show a composition bias toward basic and acidic residues. ANK repeat units lie at residues 539–568 (NGDS…GLIS), 578–607 (LYQT…DLSL), 611–640 (LGNS…AALL), 647–676 (EGLN…DVNA), 681–711 (SGRT…HVDS), and 715–744 (DGTT…DPLV). An essential for interaction with HIF1AN region spans residues 647–681 (EGLNAIHIAVMSNSMPCLLLLVAAGADVNAQERKS). Position 675 is a (3S)-3-hydroxyasparagine; by HIF1AN (Asn-675). Ser-756 is modified (phosphoserine). The stretch at 768 to 798 (PGTTPLDMATNWQVFDILNGKPYEPEFTSDD) is one ANK 7 repeat. Residues 814-889 (LQLYKLLEIP…EAIEVIQAAF (76 aa)) enclose the Death domain. A disordered region spans residues 894–926 (TAAPSPGKGAPQTLSLPLSSASTRSPVDEVRDD). Over residues 905–918 (QTLSLPLSSASTRS) the composition is skewed to polar residues. Phosphoserine; by GSK3-beta; in vitro occurs at positions 908 and 912. The residue at position 927 (Ser-927) is a Phosphoserine. Phosphoserine; by IKKB is present on residues Ser-931 and Ser-936. Phosphoserine is present on Ser-941. The residue at position 947 (Thr-947) is a Phosphothreonine.

In terms of assembly, component of the NF-kappa-B p65-p50 complex. Homodimer; component of the NF-kappa-B p50-p50 complex. Component of the NF-kappa-B p105-p50 complex. Component of the NF-kappa-B p50-c-Rel complex. Component of a complex consisting of the NF-kappa-B p50-p50 homodimer and BCL3. Also interacts with MAP3K8. NF-kappa-B p50 subunit interacts with NCOA3 coactivator, which may coactivate NF-kappa-B dependent expression via its histone acetyltransferase activity. Interacts with TSC22D3; this interaction prevents nuclear translocation and DNA-binding. Interacts with SPAG9 and UNC5CL. NFKB1/p105 interacts with CFLAR; the interaction inhibits p105 processing into p50. NFKB1/p105 forms a ternary complex with MAP3K8 and TNIP2. Interacts with GSK3B; the interaction prevents processing of p105 to p50. NFKB1/p50 interacts with NFKBIE. NFKB1/p50 interacts with NFKBIZ. Nuclear factor NF-kappa-B p50 subunit interacts with NFKBID. Directly interacts with MEN1. Interacts with HIF1AN. Interacts with FEM1A; interaction is direct. Generation of the NF-kappa-B p50 (Nuclear factor NF-kappa-B p50 subunit) transcription factor takes place both cotranslationally and post-translationally via non-mutually exclusive mechanisms. A cotranslational processing allows the production of both p50 and p105 (Nuclear factor NF-kappa-B p105 subunit) from a single NFKB1 mRNA. While translation occurs, the particular unfolded structure after the GRR repeat region acts as a substrate for the proteasome, promoting degradation of the C-terminus. The GRR acts as a proteasomal 'stop signal', protecting the region upstream of the GRR from degradation and promoting generation of p50. It is unclear if limited proteasome degradation during cotranslational processing depends on ubiquitination. NF-kappa-B p50 is also generated post-translationally following ubiquitination by the KPC complex, leading to limited processing by the proteasome downstream of the GRR region, thereby generating p50. Post-translationally, phosphorylation at the C-terminus by IKBKB/IKKB acts as a signal for ubiquitination and promotes either complete degradation or processing to generate the NF-kappa-B p50 (Nuclear factor NF-kappa-B p50 subunit). Phosphorylation at Ser-908 and Ser-912 primes p105 for proteolytic processing in response to TNF-alpha stimulation. Phosphorylation at Ser-927, Ser-931 and Ser-936 are required for BTRC/BTRCP-mediated ubiquitination and proteolysis. Phosphorylation at Ser-931 is also required for ubiquitination by the KPC complex and limited processing to generate NF-kappa-B p50 (Nuclear factor NF-kappa-B p50 subunit). In terms of processing, polyubiquitinated at multiple Lys residues in the C-terminus. Polyubiquitinated by the SCF(FBXW11) and SCF(BTRC) complexes following phosphorylation at Ser-923, Ser-927, Ser-931 and Ser-936, leading to its complete degradation. In contrast, polyubiquitination by the KPC complex following phosphorylation at Ser-931 leads to limited proteosomal processing and generation of the active NF-kappa-B p50 (Nuclear factor NF-kappa-B p50 subunit). S-nitrosylation of Cys-61 affects DNA binding. Post-translationally, the covalent modification of cysteine by 15-deoxy-Delta12,14-prostaglandin-J2 is autocatalytic and reversible. It may occur as an alternative to other cysteine modifications, such as S-nitrosylation and S-palmitoylation.

It localises to the cytoplasm. The protein localises to the nucleus. NF-kappa-B is a pleiotropic transcription factor present in almost all cell types and is the endpoint of a series of signal transduction events that are initiated by a vast array of stimuli related to many biological processes such as inflammation, immunity, differentiation, cell growth, tumorigenesis and apoptosis. NF-kappa-B is a homo- or heterodimeric complex formed by the Rel-like domain-containing proteins RELA/p65, RELB, NFKB1/p105, NFKB1/p50, REL and NFKB2/p52 and the heterodimeric p65-p50 complex appears to be most abundant one. The dimers bind at kappa-B sites in the DNA of their target genes and the individual dimers have distinct preferences for different kappa-B sites that they can bind with distinguishable affinity and specificity. Different dimer combinations act as transcriptional activators or repressors, respectively. NF-kappa-B is controlled by various mechanisms of post-translational modification and subcellular compartmentalization as well as by interactions with other cofactors or corepressors. NF-kappa-B complexes are held in the cytoplasm in an inactive state complexed with members of the NF-kappa-B inhibitor (I-kappa-B) family. In a conventional activation pathway, I-kappa-B is phosphorylated by I-kappa-B kinases (IKKs) in response to different activators, subsequently degraded thus liberating the active NF-kappa-B complex which translocates to the nucleus. NF-kappa-B heterodimeric p65-p50 and RelB-p50 complexes are transcriptional activators. The NF-kappa-B p50-p50 homodimer is a transcriptional repressor, but can act as a transcriptional activator when associated with BCL3. NFKB1 appears to have dual functions such as cytoplasmic retention of attached NF-kappa-B proteins by p105 and generation of p50 by a cotranslational processing. The proteasome-mediated process ensures the production of both p50 and p105 and preserves their independent function, although processing of NFKB1/p105 also appears to occur post-translationally. p50 binds to the kappa-B consensus sequence 5'-GGRNNYYCC-3', located in the enhancer region of genes involved in immune response and acute phase reactions. In a complex with MAP3K8, NFKB1/p105 represses MAP3K8-induced MAPK signaling; active MAP3K8 is released by proteasome-dependent degradation of NFKB1/p105. Functionally, P105 is the precursor of the active p50 subunit (Nuclear factor NF-kappa-B p50 subunit) of the nuclear factor NF-kappa-B. Acts as a cytoplasmic retention of attached NF-kappa-B proteins by p105. Its function is as follows. Constitutes the active form, which associates with RELA/p65 to form the NF-kappa-B p65-p50 complex to form a transcription factor. Together with RELA/p65, binds to the kappa-B consensus sequence 5'-GGRNNYYCC-3', located in the enhancer region of genes involved in immune response and acute phase reactions. The sequence is that of Nuclear factor NF-kappa-B p105 subunit (NFKB1) from Canis lupus familiaris (Dog).